A 325-amino-acid chain; its full sequence is NADH-quinone oxidoreductase subunit H (325 aa).

Helical transmembrane passes span 5–25 (LIII…AAAY), 75–95 (FVYW…FVLI), 117–137 (VGVV…VLAG), 157–177 (ISYE…TGTL), 190–210 (WLIW…FAET), 240–260 (FFLG…TLFF), 268–288 (DIPI…FMWV), and 305–325 (WKVL…FTLV).

The protein belongs to the complex I subunit 1 family. In terms of assembly, NDH-1 is composed of 14 different subunits. Subunits NuoA, H, J, K, L, M, N constitute the membrane sector of the complex.

Its subcellular location is the cell inner membrane. The catalysed reaction is a quinone + NADH + 5 H(+)(in) = a quinol + NAD(+) + 4 H(+)(out). NDH-1 shuttles electrons from NADH, via FMN and iron-sulfur (Fe-S) centers, to quinones in the respiratory chain. The immediate electron acceptor for the enzyme in this species is believed to be ubiquinone. Couples the redox reaction to proton translocation (for every two electrons transferred, four hydrogen ions are translocated across the cytoplasmic membrane), and thus conserves the redox energy in a proton gradient. This subunit may bind ubiquinone. The chain is NADH-quinone oxidoreductase subunit H from Protochlamydia amoebophila (strain UWE25).